Here is a 572-residue protein sequence, read N- to C-terminus: Methionine--tRNA ligase (572 aa).

The short motif at 11-21 (PYINGIKHLGN) is the 'HIGH' region element. Zn(2+) contacts are provided by Cys-143, Cys-146, Cys-156, and Cys-159. The short motif at 346–350 (QFSTS) is the 'KMSKS' region element. Thr-349 is a binding site for ATP.

This sequence belongs to the class-I aminoacyl-tRNA synthetase family. MetG type 1 subfamily. Monomer. Requires Zn(2+) as cofactor.

It localises to the cytoplasm. The catalysed reaction is tRNA(Met) + L-methionine + ATP = L-methionyl-tRNA(Met) + AMP + diphosphate. Its function is as follows. Is required not only for elongation of protein synthesis but also for the initiation of all mRNA translation through initiator tRNA(fMet) aminoacylation. This chain is Methionine--tRNA ligase, found in Cereibacter sphaeroides (strain ATCC 17029 / ATH 2.4.9) (Rhodobacter sphaeroides).